We begin with the raw amino-acid sequence, 1345 residues long: DNA-directed RNA polymerase subunit beta' (1345 aa).

4 residues coordinate Zn(2+): Cys-60, Cys-62, Cys-75, and Cys-78. Residues Asp-536, Asp-538, and Asp-540 each contribute to the Mg(2+) site. Zn(2+) contacts are provided by Cys-895, Cys-974, Cys-981, and Cys-984.

The protein belongs to the RNA polymerase beta' chain family. In terms of assembly, the RNAP catalytic core consists of 2 alpha, 1 beta, 1 beta' and 1 omega subunit. When a sigma factor is associated with the core the holoenzyme is formed, which can initiate transcription. Requires Mg(2+) as cofactor. Zn(2+) serves as cofactor.

The enzyme catalyses RNA(n) + a ribonucleoside 5'-triphosphate = RNA(n+1) + diphosphate. Its function is as follows. DNA-dependent RNA polymerase catalyzes the transcription of DNA into RNA using the four ribonucleoside triphosphates as substrates. The polypeptide is DNA-directed RNA polymerase subunit beta' (Bifidobacterium longum (strain DJO10A)).